A 493-amino-acid polypeptide reads, in one-letter code: Cysteine--tRNA ligase (493 aa).

Cysteine 29 serves as a coordination point for Zn(2+). The short motif at 31 to 41 is the 'HIGH' region element; the sequence is ATVQSEPHIGH. Zn(2+) is bound by residues cysteine 214, histidine 239, and glutamate 243. A 'KMSKS' region motif is present at residues 270-274; the sequence is KMSKS. Lysine 273 contacts ATP.

Belongs to the class-I aminoacyl-tRNA synthetase family. In terms of assembly, monomer. It depends on Zn(2+) as a cofactor.

Its subcellular location is the cytoplasm. The catalysed reaction is tRNA(Cys) + L-cysteine + ATP = L-cysteinyl-tRNA(Cys) + AMP + diphosphate. The protein is Cysteine--tRNA ligase of Renibacterium salmoninarum (strain ATCC 33209 / DSM 20767 / JCM 11484 / NBRC 15589 / NCIMB 2235).